Consider the following 201-residue polypeptide: Sec-independent protein translocase protein TatB (201 aa).

Residues 1–21 (MLDLGWSEILVIAVVLIVVVG) form a helical membrane-spanning segment. A disordered region spans residues 96–201 (LSEAAKAKPA…RRKKTAGTAP (106 aa)). 2 stretches are compositionally biased toward low complexity: residues 102-114 (AKPAASSLPAADS) and 159-187 (TSAKQAAPKAKAAAAAKAPTKNTASAPAK). A compositionally biased stretch (basic residues) spans 189–201 (PSPRRKKTAGTAP).

It belongs to the TatB family. As to quaternary structure, the Tat system comprises two distinct complexes: a TatABC complex, containing multiple copies of TatA, TatB and TatC subunits, and a separate TatA complex, containing only TatA subunits. Substrates initially bind to the TatABC complex, which probably triggers association of the separate TatA complex to form the active translocon.

The protein resides in the cell inner membrane. In terms of biological role, part of the twin-arginine translocation (Tat) system that transports large folded proteins containing a characteristic twin-arginine motif in their signal peptide across membranes. Together with TatC, TatB is part of a receptor directly interacting with Tat signal peptides. TatB may form an oligomeric binding site that transiently accommodates folded Tat precursor proteins before their translocation. The sequence is that of Sec-independent protein translocase protein TatB from Chelativorans sp. (strain BNC1).